Consider the following 351-residue polypeptide: Outer membrane porin protein 32 (351 aa).

A signal peptide spans 1–19 (MKKSLIALAVLAASGAAMA). The residue at position 20 (Gln20) is a Pyrrolidone carboxylic acid.

To bacterial outer membrane proteins and porins. In terms of assembly, homotrimer.

Its subcellular location is the cell outer membrane. In terms of biological role, forms anion selective channels. In Delftia acidovorans (Pseudomonas acidovorans), this protein is Outer membrane porin protein 32 (omp32).